The sequence spans 362 residues: ATPase ARSA2 (362 aa).

27–34 contributes to the ATP binding site; that stretch reads KGGVGKTT. Residue Asp-58 is part of the active site. Glu-235 and Asn-262 together coordinate ATP.

The protein belongs to the arsA ATPase family. Homodimer. Interacts with SEC61B.

Its subcellular location is the cytoplasm. The protein localises to the cytosol. The protein resides in the endoplasmic reticulum. ATPase required for the post-translational delivery of tail-anchored (TA) proteins to the endoplasmic reticulum. Recognizes and selectively binds the transmembrane domain of TA proteins in the cytosol. This complex then targets to the endoplasmic reticulum by membrane-bound receptors, where the tail-anchored protein is released for insertion. This process is regulated by ATP binding and hydrolysis. ATP binding drives the homodimer towards the closed dimer state, facilitating recognition of newly synthesized TA membrane proteins. ATP hydrolysis is required for insertion. Subsequently, the homodimer reverts towards the open dimer state, lowering its affinity for the membrane-bound receptor, and returning it to the cytosol to initiate a new round of targeting. The polypeptide is ATPase ARSA2 (Chlamydomonas reinhardtii (Chlamydomonas smithii)).